The sequence spans 260 residues: Thiazole synthase (260 aa).

Catalysis depends on lysine 96, which acts as the Schiff-base intermediate with DXP. 1-deoxy-D-xylulose 5-phosphate contacts are provided by residues glycine 157, 184-185, and 206-207; these read AG and NT.

The protein belongs to the ThiG family. In terms of assembly, homotetramer. Forms heterodimers with either ThiH or ThiS.

The protein resides in the cytoplasm. It carries out the reaction [ThiS sulfur-carrier protein]-C-terminal-Gly-aminoethanethioate + 2-iminoacetate + 1-deoxy-D-xylulose 5-phosphate = [ThiS sulfur-carrier protein]-C-terminal Gly-Gly + 2-[(2R,5Z)-2-carboxy-4-methylthiazol-5(2H)-ylidene]ethyl phosphate + 2 H2O + H(+). It participates in cofactor biosynthesis; thiamine diphosphate biosynthesis. Its function is as follows. Catalyzes the rearrangement of 1-deoxy-D-xylulose 5-phosphate (DXP) to produce the thiazole phosphate moiety of thiamine. Sulfur is provided by the thiocarboxylate moiety of the carrier protein ThiS. In vitro, sulfur can be provided by H(2)S. This chain is Thiazole synthase, found in Bradyrhizobium sp. (strain ORS 278).